The sequence spans 230 residues: GTP cyclohydrolase III (230 aa).

It belongs to the archaeal-type GTP cyclohydrolase family.

It catalyses the reaction GTP + 3 H2O = 2-amino-5-formylamino-6-(5-phospho-D-ribosylamino)pyrimidin-4(3H)-one + 2 phosphate + 2 H(+). Catalyzes the formation of 2-amino-5-formylamino-6-ribofuranosylamino-4(3H)-pyrimidinone ribonucleotide monophosphate and inorganic phosphate from GTP. Also has an independent pyrophosphate phosphohydrolase activity. The chain is GTP cyclohydrolase III from Saccharolobus islandicus (strain M.16.27) (Sulfolobus islandicus).